A 786-amino-acid chain; its full sequence is Ciliated left-right organizer ZP-N domains-containing protein (786 aa).

The N-terminal stretch at 1–18 (MWGSVAVVWAICLACIQP) is a signal peptide.

In terms of tissue distribution, expressed specifically by cells of the ciliated left-right organizer.

Its function is as follows. Plays a role in left-right patterning process. This chain is Ciliated left-right organizer ZP-N domains-containing protein (Ciroz), found in Mus musculus (Mouse).